A 281-amino-acid chain; its full sequence is MSMGIVEGAFLGLVQGLTEFLPISSSGHLAVVGTLLGSDPGAAFTAICQLGTEAAVIGYFRKDIARIIGHWARSLVGRLPRNDPDARMGWLVTLGTIPIGVLGLLFQDSIETVLRGFVVIGTTLWLFALVLGAADRFGRKERTLDQLSWKHGLLFGLAQALALIPGVSRSGGTITMGLLLGYTREAAARYSFLLAIPAVVLSGFYQLYDELSRGTTIAWVPTAVATVVAFVVGYAVIAWLMRFISTHSYTPFVVYRIAAAVVVYALVLAGALPAFQGTGGS.

6 helical membrane-spanning segments follow: residues 90-110 (WLVT…QDSI), 113-133 (VLRG…VLGA), 147-167 (LSWK…IPGV), 191-211 (SFLL…YDEL), 217-237 (IAWV…YAVI), and 257-277 (IAAA…AFQG).

It belongs to the UppP family.

The protein localises to the cell membrane. The enzyme catalyses di-trans,octa-cis-undecaprenyl diphosphate + H2O = di-trans,octa-cis-undecaprenyl phosphate + phosphate + H(+). Functionally, catalyzes the dephosphorylation of undecaprenyl diphosphate (UPP). Confers resistance to bacitracin. The protein is Undecaprenyl-diphosphatase of Kineococcus radiotolerans (strain ATCC BAA-149 / DSM 14245 / SRS30216).